We begin with the raw amino-acid sequence, 83 residues long: Small ribosomal subunit protein uS17 (83 aa).

It belongs to the universal ribosomal protein uS17 family. In terms of assembly, part of the 30S ribosomal subunit.

In terms of biological role, one of the primary rRNA binding proteins, it binds specifically to the 5'-end of 16S ribosomal RNA. This is Small ribosomal subunit protein uS17 from Campylobacter curvus (strain 525.92).